The primary structure comprises 973 residues: UvrABC system protein A (973 aa).

34 to 41 (GLSGSGKS) serves as a coordination point for ATP. 2 ABC transporter domains span residues 331 to 609 (WAKS…PKSL) and 629 to 958 (PKKK…QFLK). Residue 662-669 (GVSGGGKS) participates in ATP binding. A C4-type zinc finger spans residues 761–787 (CEACQGDGVIKIEMHFLPDVYVTCDVC).

Belongs to the ABC transporter superfamily. UvrA family. As to quaternary structure, forms a heterotetramer with UvrB during the search for lesions.

Its subcellular location is the cytoplasm. The UvrABC repair system catalyzes the recognition and processing of DNA lesions. UvrA is an ATPase and a DNA-binding protein. A damage recognition complex composed of 2 UvrA and 2 UvrB subunits scans DNA for abnormalities. When the presence of a lesion has been verified by UvrB, the UvrA molecules dissociate. The sequence is that of UvrABC system protein A from Rhizobium meliloti (strain 1021) (Ensifer meliloti).